Reading from the N-terminus, the 366-residue chain is Spermine synthase (366 aa).

A2 carries the post-translational modification N-acetylalanine. Phosphoserine is present on S57. Positions 122–362 (RYWPTADGRL…ELWVFYTVWK (241 aa)) constitute a PABS domain. Q148 contributes to the S-adenosyl 3-(methylsulfanyl)propylamine binding site. 2 residues coordinate spermidine: Y177 and D201. Residues E220 and 255–256 (DC) contribute to the S-adenosyl 3-(methylsulfanyl)propylamine site. Catalysis depends on D276, which acts as the Proton acceptor. Residues Y351 and E353 each coordinate spermidine.

Belongs to the spermidine/spermine synthase family. Homodimer. Dimerization is mediated through the N-terminal domain and seems to be required for activity as deletion of the N-terminal domain causes complete loss of activity.

The enzyme catalyses S-adenosyl 3-(methylsulfanyl)propylamine + spermidine = spermine + S-methyl-5'-thioadenosine + H(+). It functions in the pathway amine and polyamine biosynthesis; spermine biosynthesis; spermine from spermidine: step 1/1. Functionally, catalyzes the production of spermine from spermidine and decarboxylated S-adenosylmethionine (dcSAM). Required for normal viability, growth and fertility. This Mus musculus (Mouse) protein is Spermine synthase (Sms).